The chain runs to 551 residues: Urocanate hydratase (551 aa).

Residues 48 to 49, glutamine 126, 172 to 174, glutamate 192, arginine 197, 238 to 239, 259 to 263, 269 to 270, and tyrosine 318 contribute to the NAD(+) site; these read GG, GMG, NA, QTSAH, and YI. Cysteine 406 is a catalytic residue. Glycine 488 contacts NAD(+).

This sequence belongs to the urocanase family. It depends on NAD(+) as a cofactor.

It localises to the cytoplasm. It carries out the reaction 4-imidazolone-5-propanoate = trans-urocanate + H2O. It participates in amino-acid degradation; L-histidine degradation into L-glutamate; N-formimidoyl-L-glutamate from L-histidine: step 2/3. In terms of biological role, catalyzes the conversion of urocanate to 4-imidazolone-5-propionate. In Geobacillus kaustophilus (strain HTA426), this protein is Urocanate hydratase.